The sequence spans 333 residues: 4-hydroxy-2-oxovalerate aldolase (333 aa).

One can recognise a Pyruvate carboxyltransferase domain in the interval 4-254; it reads VKIFDLTLRD…DCGIDLYKTM (251 aa). Substrate is bound at residue 12 to 13; sequence RD. Residue D13 participates in Mn(2+) binding. H16 functions as the Proton acceptor in the catalytic mechanism. Substrate is bound at residue H193. Residues H193 and H195 each contribute to the Mn(2+) site. A substrate-binding site is contributed by Y284.

This sequence belongs to the 4-hydroxy-2-oxovalerate aldolase family.

The catalysed reaction is (S)-4-hydroxy-2-oxopentanoate = acetaldehyde + pyruvate. This Desulfitobacterium hafniense (strain DSM 10664 / DCB-2) protein is 4-hydroxy-2-oxovalerate aldolase.